The primary structure comprises 443 residues: tRNA-2-methylthio-N(6)-dimethylallyladenosine synthase (443 aa).

The MTTase N-terminal domain occupies 12–126 (KTFRVKSFGC…LPEMVADAAA (115 aa)). Residues Cys21, Cys57, Cys89, Cys162, Cys166, and Cys169 each contribute to the [4Fe-4S] cluster site. In terms of domain architecture, Radical SAM core spans 148 to 380 (RKSAPTAFLT…QAALNRDQLA (233 aa)). Residues 383 to 443 (KASVGKTCEV…GPNSISGRLA (61 aa)) enclose the TRAM domain.

It belongs to the methylthiotransferase family. MiaB subfamily. As to quaternary structure, monomer. [4Fe-4S] cluster is required as a cofactor.

The protein localises to the cytoplasm. The enzyme catalyses N(6)-dimethylallyladenosine(37) in tRNA + (sulfur carrier)-SH + AH2 + 2 S-adenosyl-L-methionine = 2-methylsulfanyl-N(6)-dimethylallyladenosine(37) in tRNA + (sulfur carrier)-H + 5'-deoxyadenosine + L-methionine + A + S-adenosyl-L-homocysteine + 2 H(+). Catalyzes the methylthiolation of N6-(dimethylallyl)adenosine (i(6)A), leading to the formation of 2-methylthio-N6-(dimethylallyl)adenosine (ms(2)i(6)A) at position 37 in tRNAs that read codons beginning with uridine. The protein is tRNA-2-methylthio-N(6)-dimethylallyladenosine synthase of Novosphingobium aromaticivorans (strain ATCC 700278 / DSM 12444 / CCUG 56034 / CIP 105152 / NBRC 16084 / F199).